Reading from the N-terminus, the 240-residue chain is Methylthioribulose-1-phosphate dehydratase (240 aa).

Residue C99 participates in substrate binding. H116 and H118 together coordinate Zn(2+). The active-site Proton donor/acceptor is the E145. H201 serves as a coordination point for Zn(2+).

Belongs to the aldolase class II family. MtnB subfamily. It depends on Zn(2+) as a cofactor.

It localises to the cytoplasm. It carries out the reaction 5-(methylsulfanyl)-D-ribulose 1-phosphate = 5-methylsulfanyl-2,3-dioxopentyl phosphate + H2O. The protein operates within amino-acid biosynthesis; L-methionine biosynthesis via salvage pathway; L-methionine from S-methyl-5-thio-alpha-D-ribose 1-phosphate: step 2/6. Catalyzes the dehydration of methylthioribulose-1-phosphate (MTRu-1-P) into 2,3-diketo-5-methylthiopentyl-1-phosphate (DK-MTP-1-P). This is Methylthioribulose-1-phosphate dehydratase from Ajellomyces capsulatus (strain G186AR / H82 / ATCC MYA-2454 / RMSCC 2432) (Darling's disease fungus).